Reading from the N-terminus, the 578-residue chain is Phosphoenolpyruvate-protein phosphotransferase (578 aa).

His195 acts as the Tele-phosphohistidine intermediate in catalysis. Phosphoenolpyruvate contacts are provided by Arg302 and Arg338. Residues Glu437 and Asp461 each coordinate Mg(2+). Phosphoenolpyruvate is bound by residues 460–461 (ND) and Arg471. The active-site Proton donor is Cys508.

The protein belongs to the PEP-utilizing enzyme family. Homodimer. It depends on Mg(2+) as a cofactor.

Its subcellular location is the cytoplasm. The enzyme catalyses L-histidyl-[protein] + phosphoenolpyruvate = N(pros)-phospho-L-histidyl-[protein] + pyruvate. Its function is as follows. General (non sugar-specific) component of the phosphoenolpyruvate-dependent sugar phosphotransferase system (sugar PTS). This major carbohydrate active-transport system catalyzes the phosphorylation of incoming sugar substrates concomitantly with their translocation across the cell membrane. Enzyme I transfers the phosphoryl group from phosphoenolpyruvate (PEP) to the phosphoryl carrier protein (HPr). The polypeptide is Phosphoenolpyruvate-protein phosphotransferase (ptsI) (Geobacillus stearothermophilus (Bacillus stearothermophilus)).